Consider the following 406-residue polypeptide: Lissencephaly-1 homolog (406 aa).

The 33-residue stretch at 7-39 (QREELNKAIADYLRSNGYESALEAFQKEAEMPG) folds into the LisH domain. A coiled-coil region spans residues 54-81 (TSVIRLQKKVMDLEAKLAEAEKEFQSGG). The span at 74–89 (EKEFQSGGPNKKERSP) shows a compositional bias: basic and acidic residues. The segment at 74 to 99 (EKEFQSGGPNKKERSPSEWIPRPPAR) is disordered. WD repeat units lie at residues 104-145 (GHRS…RTLK), 146-185 (GHTDAVQDVSFDQQGKLLASCSADMTIKLWDFQTFENIKT), 188-227 (GHDHNVSSVHFMPNGDFLISASRDKTIKMWELATGYCVKT), 230-269 (GHREWVRTVRVNQDGSLLASCSNDQTVRVWVVANKECKAE), 272-329 (EHEH…CIMT), 332-371 (GHDNWVRGVVWHPGGKYIISASDDKTIRVWDYKNKRCQKT), and 374-406 (AHQHFCTSIDFHRSAPYVITGSVDQTVKVWECR).

This sequence belongs to the WD repeat LIS1/nudF family.

The protein resides in the cytoplasm. The protein localises to the cytoskeleton. It is found in the microtubule organizing center. It localises to the centrosome. Its function is as follows. Positively regulates the activity of the minus-end directed microtubule motor protein dynein. May enhance dynein-mediated microtubule sliding by targeting dynein to the microtubule plus end. Required for several dynein- and microtubule-dependent processes. In Branchiostoma floridae (Florida lancelet), this protein is Lissencephaly-1 homolog.